The primary structure comprises 551 residues: Alkaline nuclease (551 aa).

This sequence belongs to the herpesviridae alkaline nuclease family. In terms of assembly, interacts with major DNA-binding protein; this interaction increases the nuclease processivity of the alkaline exonuclease.

It is found in the host nucleus. It localises to the host cytoplasm. In terms of biological role, plays a role in processing non linear or branched viral DNA intermediates in order to promote the production of mature packaged unit-length linear progeny viral DNA molecules. Exhibits endonuclease and exonuclease activities and accepts both double-stranded and single-stranded DNA as substrate. Exonuclease digestion of DNA is in the 5'-&gt; 3' direction and the products are 5'-monophosphate nucleosides. Additionally, forms a recombinase with the major DNA-binding protein, which displays strand exchange activity. This chain is Alkaline nuclease, found in Varicella-zoster virus (strain Oka vaccine) (HHV-3).